Here is a 405-residue protein sequence, read N- to C-terminus: Tryptophan synthase beta chain (405 aa).

Lys-98 is modified (N6-(pyridoxal phosphate)lysine).

It belongs to the TrpB family. In terms of assembly, tetramer of two alpha and two beta chains. Requires pyridoxal 5'-phosphate as cofactor.

It carries out the reaction (1S,2R)-1-C-(indol-3-yl)glycerol 3-phosphate + L-serine = D-glyceraldehyde 3-phosphate + L-tryptophan + H2O. Its pathway is amino-acid biosynthesis; L-tryptophan biosynthesis; L-tryptophan from chorismate: step 5/5. The beta subunit is responsible for the synthesis of L-tryptophan from indole and L-serine. The sequence is that of Tryptophan synthase beta chain from Xanthomonas axonopodis pv. citri (strain 306).